The following is a 211-amino-acid chain: Glycerol-3-phosphate acyltransferase 2 (211 aa).

Helical transmembrane passes span 6-26 (FASL…VVVG), 57-77 (IIVF…PVIF), 82-102 (HYLC…PIFL), 124-144 (FFLI…MVSL), and 148-168 (ISVV…LSII).

It belongs to the PlsY family. In terms of assembly, probably interacts with PlsX.

It is found in the cell membrane. The enzyme catalyses an acyl phosphate + sn-glycerol 3-phosphate = a 1-acyl-sn-glycero-3-phosphate + phosphate. It participates in lipid metabolism; phospholipid metabolism. Functionally, catalyzes the transfer of an acyl group from acyl-phosphate (acyl-PO(4)) to glycerol-3-phosphate (G3P) to form lysophosphatidic acid (LPA). This enzyme utilizes acyl-phosphate as fatty acyl donor, but not acyl-CoA or acyl-ACP. In Lactobacillus acidophilus (strain ATCC 700396 / NCK56 / N2 / NCFM), this protein is Glycerol-3-phosphate acyltransferase 2.